We begin with the raw amino-acid sequence, 175 residues long: Large ribosomal subunit protein uL10 (175 aa).

The protein belongs to the universal ribosomal protein uL10 family. In terms of assembly, part of the ribosomal stalk of the 50S ribosomal subunit. The N-terminus interacts with L11 and the large rRNA to form the base of the stalk. The C-terminus forms an elongated spine to which L12 dimers bind in a sequential fashion forming a multimeric L10(L12)X complex.

In terms of biological role, forms part of the ribosomal stalk, playing a central role in the interaction of the ribosome with GTP-bound translation factors. The polypeptide is Large ribosomal subunit protein uL10 (Prochlorococcus marinus subsp. pastoris (strain CCMP1986 / NIES-2087 / MED4)).